A 547-amino-acid chain; its full sequence is Protein RBL (547 aa).

5 WD repeats span residues 21–60 (LEHG…IAKE), 65–104 (DCSA…KIAR), 214–253 (SGAA…KNVL), 285–332 (EFQD…VKIL), and 334–373 (GPKE…NWSA). Residues 466 to 547 (SPASEEAGQN…GGDDDDDAYY (82 aa)) are disordered. Basic and acidic residues predominate over residues 499-511 (SEKAMELQAEKAK). The segment covering 530–547 (QETDDSINGGDDDDDAYY) has biased composition (acidic residues).

As to quaternary structure, part of a complex composed of TRO, RBL and WDR5A. Interacts with TRO and WDR5A, but not with WDR5B. This complex is formed during both vegetative and reproductive development. Strongly expressed in root tips, shoot apices, vascular tissues, developing embryos and endosperms.

Its subcellular location is the nucleus. Promotes the expression of FLC and FLC homologs to repress the floral transition. Promotes WRKY70 and LTP7 genes epigenetic methylation (e.g. H3K4me3) and subsequent expression. This chain is Protein RBL, found in Arabidopsis thaliana (Mouse-ear cress).